The primary structure comprises 2339 residues: Voltage-dependent N-type calcium channel subunit alpha-1B (2339 aa).

Over 1–90 (MVRFGDELGG…DNVVRKYAKR (90 aa)) the chain is Cytoplasmic. A compositionally biased stretch (gly residues) spans 15–34 (AGGAERARGGGAGGAGGPGP). The segment at 15–37 (AGGAERARGGGAGGAGGPGPGGL) is disordered. The residue at position 22 (Arg22) is an Omega-N-methylarginine. The stretch at 82–359 (NVVRKYAKRI…LVLGVLSGEF (278 aa)) is one I repeat. The chain crosses the membrane as a helical span at residues 91 to 114 (ITEWPPFEYMILATIIANCIVLAL). At 115-131 (EQHLPDGDKTPMSERLD) the chain is on the extracellular side. A helical transmembrane segment spans residues 132–152 (DTEPYFIGIFCFEAGIKILAL). Residues 153-163 (GFVLHKGSYLR) are Cytoplasmic-facing. The helical transmembrane segment at 164-182 (NGWNVMDFVVVLTGILATA) threads the bilayer. Residues 183–187 (GTDFD) lie on the Extracellular side of the membrane. The chain crosses the membrane as a helical span at residues 188 to 211 (LRTLRAVRVLRPLKLVSGIPSLQV). Topologically, residues 212-221 (VLKSIMKAMV) are cytoplasmic. Residues 222–244 (PLLQIGLLLFFAILMFAIIGLEF) traverse the membrane as a helical segment. Residues 245–331 (YMGKFHKACF…NTNDAAGNTW (87 aa)) lie on the Extracellular side of the membrane. Asn256 carries an N-linked (GlcNAc...) asparagine glycan. The helical transmembrane segment at 332 to 356 (NWLYFIPLIIIGSFFMLNLVLGVLS) threads the bilayer. At 357 to 483 (GEFAKERERV…FFIRRMVKAQ (127 aa)) the chain is on the cytoplasmic side. The binding to the beta subunit stretch occupies residues 379–396 (QQIERELNGYLEWIFKAE). Position 411 is a phosphoserine (Ser411). 452–459 (ASLKSGKT) is an ATP binding site. One copy of the II repeat lies at 469 to 713 (EKMFRFFIRR…VFLAIAVDNL (245 aa)). The helical transmembrane segment at 484-502 (SFYWTVLCVVALNTLCVAM) threads the bilayer. Residues 503-512 (VHYNQPQRLT) lie on the Extracellular side of the membrane. A helical transmembrane segment spans residues 513-535 (TALYFAEFVFLGLFLTEMSLKMY). Residues 536-545 (GLGPRSYFRS) lie on the Cytoplasmic side of the membrane. Ser545 provides a ligand contact to a 1,2-diacyl-sn-glycero-3-phospho-(1D-myo-inositol-4,5-bisphosphate). The helical transmembrane segment at 546-567 (SFNCFDFGVIVGSIFEVVWAAV) threads the bilayer. Over 568-574 (KPGTSFG) the chain is Extracellular. A helical transmembrane segment spans residues 575-587 (ISVLRALRLLRIF). A 1,2-diacyl-sn-glycero-3-phospho-(1D-myo-inositol-4,5-bisphosphate)-binding residues include Arg585 and Lys588. Residues 588–605 (KVTKYWNSLRNLVVSLLN) are Cytoplasmic-facing. A helical membrane pass occupies residues 606–631 (SMKSIISLLFLLFLFIVVFALLGMQL). The Extracellular portion of the chain corresponds to 632–683 (FGGQFNFKDETPTTNFDTFPAAILTVFQILTGEDWNAVMYHGIESQGGVSRG). Residues 684 to 710 (MFSSFYFIVLTLFGNYTLLNVFLAIAV) form a helical membrane-spanning segment. Residues 711–1156 (DNLANAQELT…CCHYIVTMRY (446 aa)) are Cytoplasmic-facing. 3 positions are modified to phosphoserine: Ser746, Ser749, and Ser784. 5 stretches are compositionally biased toward basic and acidic residues: residues 809–827 (DVKT…RDAP), 870–891 (EQDR…EERG), 927–937 (GSPEEAAEREP), 973–984 (CPREAESSEEPA), and 999–1026 (TAEK…RNHQ). Disordered stretches follow at residues 809-1026 (DVKT…RNHQ) and 1056-1084 (VEEQ…TTVH). Residues 1066 to 1083 (QRNVTRMGSQPPDTSTTV) show a composition bias toward polar residues. Ser1074 is modified (phosphoserine). The stretch at 1142-1424 (NLLRRCCHYI…IFVALIIITF (283 aa)) is one III repeat. A helical transmembrane segment spans residues 1157–1175 (FEMVILVVIALSSIALAAE). The Extracellular segment spans residues 1176–1183 (DPVRTDSP). Residues 1184–1208 (RNNALKYMDYIFTGVFTFEMVIKMI) form a helical membrane-spanning segment. Over 1209–1222 (DLGLLLHPGAYFRD) the chain is Cytoplasmic. A helical membrane pass occupies residues 1223–1243 (LWNILDFIVVSGALVAFAFSG). Residues 1244 to 1249 (SKGKDI) lie on the Extracellular side of the membrane. The chain crosses the membrane as a helical span at residues 1250-1270 (STIKSLRVLRVLRPLKTIKRL). Residues 1271–1288 (PKLKAVFDCVVNSLKNVL) lie on the Cytoplasmic side of the membrane. The chain crosses the membrane as a helical span at residues 1289 to 1308 (NILIVYMLFMFIFAVIAVQL). Residues 1309–1395 (FKGKFFYCTD…EQGPSPGYRM (87 aa)) lie on the Extracellular side of the membrane. Residues 1396–1421 (ELSIFYVVYFVVFPFFFVNIFVALII) form a helical membrane-spanning segment. Residues 1422 to 1476 (ITFQEQGDKVMSECSLEKNERACIDFAISARPLTRYMPQNKQSFQYKTWTFVVSP) lie on the Cytoplasmic side of the membrane. One copy of the IV repeat lies at 1461–1714 (NKQSFQYKTW…LFVAVIMDNF (254 aa)). The chain crosses the membrane as a helical span at residues 1477 to 1495 (PFEYFIMAMIALNTVVLMM). At 1496-1503 (KFYDAPYE) the chain is on the extracellular side. The helical transmembrane segment at 1504–1528 (YELMLKCLNIVFTSMFSMECVLKII) threads the bilayer. The Cytoplasmic portion of the chain corresponds to 1529-1538 (AFGVLNYFRD). The chain crosses the membrane as a helical span at residues 1539–1560 (AWNVFDFVTVLGSITDILVTEI). Over 1561–1566 (ANNFIN) the chain is Extracellular. Asn1566 carries N-linked (GlcNAc...) asparagine glycosylation. A helical membrane pass occupies residues 1567-1585 (LSFLRLFRAARLIKLLRQG). Residues 1586–1604 (YTIRILLWTFVQSFKALPY) are Cytoplasmic-facing. A helical membrane pass occupies residues 1605–1624 (VCLLIAMLFFIYAIIGMQVF). Residues 1625–1686 (GNIALDDDTS…SNASECGSDF (62 aa)) are Extracellular-facing. Residue Asn1678 is glycosylated (N-linked (GlcNAc...) asparagine). A helical transmembrane segment spans residues 1687–1710 (AYFYFVSFIFLCSFLMLNLFVAVI). The Cytoplasmic portion of the chain corresponds to 1711 to 2339 (MDNFEYLTRD…CHHPDRDRRC (629 aa)). Residues 1727-1762 (HHLDEFIRVWAEYDPAACGRISYSDMFEMLKHMSPP) enclose the EF-hand domain. Ca(2+)-binding residues include Asp1740, Arg1746, and Asp1751. The disordered stretch occupies residues 1983–2312 (TLSGPDAEPQ…QPPPLRRVPN (330 aa)). Residues 2050 to 2064 (PHHHHHRCHRRRDRK) are compositionally biased toward basic residues. Phosphoserine is present on Ser2067. Basic and acidic residues predominate over residues 2099 to 2136 (CRRERERRQERGRSQERRQPSSSSSEKHRFYSCDRFGG). Polar residues-rich tracts occupy residues 2144-2155 (PSLSSHPTSPTA) and 2165-2181 (GSGS…SGAS). Residues Ser2224, Ser2233, and Ser2256 each carry the phosphoserine modification. Residues 2286-2302 (SNSGRSSRTSYVSSLTS) show a composition bias toward low complexity.

This sequence belongs to the calcium channel alpha-1 subunit (TC 1.A.1.11) family. CACNA1B subfamily. In terms of assembly, multisubunit complex consisting of alpha-1, alpha-2, beta and delta subunits in a 1:1:1:1 ratio. The channel activity is directed by the pore-forming and voltage-sensitive alpha-1 subunit. In many cases, this subunit is sufficient to generate voltage-sensitive calcium channel activity. The auxiliary subunits beta and alpha-2/delta linked by a disulfide bridge regulate the channel activity. Interacts with RIMS1. Interacts with FMR1 (via C-terminus); this interaction induces a decrease in the number of presynaptic functional CACNA1B channels at the cell surface. In terms of processing, phosphorylated in vitro by CaM-kinase II, PKA, PKC and CGPK. Widespread expression throughout the brain. Highest levels in corpus striatum and midbrain.

Its subcellular location is the membrane. The catalysed reaction is Ca(2+)(in) = Ca(2+)(out). Is specifically blocked by omega-conotoxin GVIA. Is specifically blocked by omega-conotoxin MVIIA (ziconotide). Is insensitive to dihydropyridines (DHP). Voltage-sensitive calcium channels (VSCC) mediate the entry of calcium ions into excitable cells and are also involved in a variety of calcium-dependent processes, including muscle contraction, hormone or neurotransmitter release, gene expression, cell motility, cell division and cell death. This alpha-1B subunit gives rise to N-type calcium currents. N-type calcium channels belong to the 'high-voltage activated' (HVA) group. They are involved in pain signaling. Calcium channels containing alpha-1B subunit may play a role in directed migration of immature neurons. Mediates Ca(2+) release probability at hippocampal neuronal soma and synaptic terminals. The chain is Voltage-dependent N-type calcium channel subunit alpha-1B (CACNA1B) from Oryctolagus cuniculus (Rabbit).